A 355-amino-acid chain; its full sequence is RNA 3'-terminal phosphate cyclase (355 aa).

Residues glutamine 100 and 300 to 304 (HLADQ) contribute to the ATP site. The Tele-AMP-histidine intermediate role is filled by histidine 325.

Belongs to the RNA 3'-terminal cyclase family. Type 1 subfamily.

The protein resides in the cytoplasm. It carries out the reaction a 3'-end 3'-phospho-ribonucleotide-RNA + ATP = a 3'-end 2',3'-cyclophospho-ribonucleotide-RNA + AMP + diphosphate. Its function is as follows. Catalyzes the conversion of 3'-phosphate to a 2',3'-cyclic phosphodiester at the end of RNA. The mechanism of action of the enzyme occurs in 3 steps: (A) adenylation of the enzyme by ATP; (B) transfer of adenylate to an RNA-N3'P to produce RNA-N3'PP5'A; (C) and attack of the adjacent 2'-hydroxyl on the 3'-phosphorus in the diester linkage to produce the cyclic end product. The biological role of this enzyme is unknown but it is likely to function in some aspects of cellular RNA processing. The chain is RNA 3'-terminal phosphate cyclase from Methanosarcina acetivorans (strain ATCC 35395 / DSM 2834 / JCM 12185 / C2A).